The following is an 85-amino-acid chain: Probable dolichol-phosphate mannosyltransferase subunit 3 (85 aa).

The next 2 membrane-spanning stretches (helical) occupy residues 13 to 33 (VLLVLVWLLAYTEVVPVLSYI) and 37 to 57 (AHCLVYYIYAAFNVIYGVATF).

It belongs to the DPM3 family.

Its subcellular location is the endoplasmic reticulum membrane. Its pathway is protein modification; protein glycosylation. Stabilizer subunit of the dolichol-phosphate-mannose synthase complex. This Caenorhabditis briggsae protein is Probable dolichol-phosphate mannosyltransferase subunit 3.